The sequence spans 202 residues: MKALTTRQQEVYDLVRDHLAQTGMPPTRAEIAQRLGFRSPNAAEEHLKALARKGVIEIVSGASRGIRLLMEEEDGLPLIGRVAAGEPLLAQQHIEGHYKVDPSMFKPSADFLLRVNGMSMRDIGILDGDLLAVHKTQDVRNGQVVVARIDDEVTVKRLKKQGNIVQLLPENSEFQPIVVDLREQSFTIEGLAVGVIRNGDWI.

The H-T-H motif DNA-binding region spans Arg-28–Lys-48. Residues Ser-119 and Lys-156 each act as for autocatalytic cleavage activity in the active site.

It belongs to the peptidase S24 family. In terms of assembly, homodimer.

The enzyme catalyses Hydrolysis of Ala-|-Gly bond in repressor LexA.. Functionally, represses a number of genes involved in the response to DNA damage (SOS response), including recA and lexA. Binds to the 16 bp palindromic sequence 5'-CTGTATATATATACAG-3'. In the presence of single-stranded DNA, RecA interacts with LexA causing an autocatalytic cleavage which disrupts the DNA-binding part of LexA, leading to derepression of the SOS regulon and eventually DNA repair. The protein is LexA repressor of Yersinia enterocolitica serotype O:8 / biotype 1B (strain NCTC 13174 / 8081).